Here is a 351-residue protein sequence, read N- to C-terminus: Ferrochelatase (351 aa).

The Fe cation site is built by histidine 221 and glutamate 302.

The protein belongs to the ferrochelatase family.

The protein localises to the cytoplasm. The catalysed reaction is heme b + 2 H(+) = protoporphyrin IX + Fe(2+). The protein operates within porphyrin-containing compound metabolism; protoheme biosynthesis; protoheme from protoporphyrin-IX: step 1/1. In terms of biological role, catalyzes the ferrous insertion into protoporphyrin IX. The protein is Ferrochelatase of Bradyrhizobium sp. (strain BTAi1 / ATCC BAA-1182).